A 301-amino-acid chain; its full sequence is ADP,ATP carrier protein 1 (301 aa).

3 Solcar repeats span residues 8–100, 113–203, and 210–299; these read YGFA…YKQV, RYFL…AKGM, and TSIF…VKAL. A run of 5 helical transmembrane segments spans residues 10-39, 77-101, 112-132, 181-201, and 213-233; these read FAKDFLAGGISAAVSKTAVAPIERVKLLLQ, LANVIRYFPTQALNFAFKDVYKQVF, WRYFLGNLGSGGAAGATSLCF, VSVQGIIIYRAAYFGCFDTAK, and FVSWAIAQVVTTASGIISYPF. Residues R82 and K94 each coordinate ADP. R237 serves as a coordination point for ADP. The important for transport activity stretch occupies residues 237 to 242; that stretch reads RRRMMM. The Nucleotide carrier signature motif motif lies at 237–242; the sequence is RRRMMM. Residues 276–293 traverse the membrane as a helical segment; it reads AFSNVLRGTGGALVLVFY.

It belongs to the mitochondrial carrier (TC 2.A.29) family. Monomer.

It localises to the mitochondrion inner membrane. It catalyses the reaction ADP(in) + ATP(out) = ADP(out) + ATP(in). The matrix-open state (m-state) is inhibited by the membrane-permeable bongkrekic acid (BKA). The cytoplasmic-open state (c-state) is inhibited by the membrane-impermeable toxic inhibitor carboxyatractyloside (CATR). Functionally, ADP:ATP antiporter that mediates import of ADP into the mitochondrial matrix for ATP synthesis, and export of ATP out to fuel the cell. Cycles between the cytoplasmic-open state (c-state) and the matrix-open state (m-state): operates by the alternating access mechanism with a single substrate-binding site intermittently exposed to either the cytosolic (c-state) or matrix (m-state) side of the inner mitochondrial membrane. In Anopheles gambiae (African malaria mosquito), this protein is ADP,ATP carrier protein 1.